Consider the following 114-residue polypeptide: Notch-regulated ankyrin repeat-containing protein (114 aa).

2 ANK repeats span residues 50–79 (EGQT…DIRL) and 83–112 (DGWS…YSSS).

This sequence belongs to the NRARP family. As to quaternary structure, forms a ternary complex with the intracellular domain (ICD) of notch1 and rbpj/suh.

Functionally, promotes loss of intracellular domain (ICD) of Notch1 in embryos. By down-regulating ICD levels, could function as a negative feedback regulator of Notch signaling that attenuates ICD-mediated transcription. Involved in angiogenesis. May be involved in somitogenesis. The chain is Notch-regulated ankyrin repeat-containing protein (nrarp) from Xenopus tropicalis (Western clawed frog).